The following is a 281-amino-acid chain: Pantothenate synthetase (281 aa).

Position 30–37 (30–37 (MGYLHEGH)) interacts with ATP. The active-site Proton donor is the histidine 37. Glutamine 61 serves as a coordination point for (R)-pantoate. Residue glutamine 61 coordinates beta-alanine. 147-150 (GEKD) serves as a coordination point for ATP. Glutamine 153 serves as a coordination point for (R)-pantoate. ATP-binding positions include isoleucine 176 and 184 to 187 (KSSR).

This sequence belongs to the pantothenate synthetase family. In terms of assembly, homodimer.

It is found in the cytoplasm. The catalysed reaction is (R)-pantoate + beta-alanine + ATP = (R)-pantothenate + AMP + diphosphate + H(+). It participates in cofactor biosynthesis; (R)-pantothenate biosynthesis; (R)-pantothenate from (R)-pantoate and beta-alanine: step 1/1. Functionally, catalyzes the condensation of pantoate with beta-alanine in an ATP-dependent reaction via a pantoyl-adenylate intermediate. This chain is Pantothenate synthetase, found in Clostridium botulinum (strain ATCC 19397 / Type A).